The chain runs to 345 residues: Phosphoribosylformylglycinamidine cyclo-ligase (345 aa).

This sequence belongs to the AIR synthase family.

The protein localises to the cytoplasm. It catalyses the reaction 2-formamido-N(1)-(5-O-phospho-beta-D-ribosyl)acetamidine + ATP = 5-amino-1-(5-phospho-beta-D-ribosyl)imidazole + ADP + phosphate + H(+). It participates in purine metabolism; IMP biosynthesis via de novo pathway; 5-amino-1-(5-phospho-D-ribosyl)imidazole from N(2)-formyl-N(1)-(5-phospho-D-ribosyl)glycinamide: step 2/2. This chain is Phosphoribosylformylglycinamidine cyclo-ligase, found in Pasteurella multocida (strain Pm70).